Reading from the N-terminus, the 638-residue chain is MDLWRVFLTLALAVSSDMFPGSGATPATLGKASPVLQRINPSLRESSSGKPRFTKCRSPELETFSCYWTEGDDHNLKVPGSIQLYYARRIAHEWTPEWKECPDYVSAGANSCYFNSSYTSIWIPYCIKLTTNGDLLDEKCFTVDEIVQPDPPIGLNWTLLNISLPGIRGDIQVSWQPPPSADVLKGWIILEYEIQYKEVNETKWKTMSPIWSTSVPLYSLRLDKEHEVRVRSRQRSFEKYSEFSEVLRVTFPQMDTLAACEEDFRFPWFLIIIFGIFGVAVMLFVVIFSKQQRIKMLILPPVPVPKIKGIDPDLLKEGKLEEVNTILGIHDNYKPDFYNDDSWVEFIELDIDDADEKTEESDTDRLLSDDQEKSAGILGAKDDDSGRTSCYDPDILDTDFHTSDMCDGTSEFAQPQKLKAEADLLCLDQKNLKNSPYDASLGSLHPSITLTMEDKPQPLLGSETESTHQLPSTPMSSPVSLANIDFYAQVSDITPAGGVVLSPGQKIKAGLAQGNTQLEVAAPCQENYSMNSAYFCESDAKKCIAAAPHMEATTCVKPSFNQEDIYITTESLTTTARMSETADTAPDAEPVPDYTTVHTVKSPRGLILNATALPLPDKKKFLSSCGYVSTDQLNKIMQ.

A signal peptide spans 1–18 (MDLWRVFLTLALAVSSDM). The Extracellular portion of the chain corresponds to 19-265 (FPGSGATPAT…TLAACEEDFR (247 aa)). 2 disulfides stabilise this stretch: Cys56–Cys66 and Cys101–Cys112. An N-linked (GlcNAc...) asparagine glycan is attached at Asn115. A disulfide bridge connects residues Cys126 and Cys140. The Fibronectin type-III domain occupies 151–254 (PPIGLNWTLL…EVLRVTFPQM (104 aa)). 3 N-linked (GlcNAc...) asparagine glycosylation sites follow: Asn156, Asn161, and Asn200. The WSXWS motif motif lies at 240–244 (YSEFS). Residues 266–289 (FPWFLIIIFGIFGVAVMLFVVIFS) traverse the membrane as a helical segment. Residues 290 to 638 (KQQRIKMLIL…STDQLNKIMQ (349 aa)) lie on the Cytoplasmic side of the membrane. Residues 295–380 (KMLILPPVPV…QEKSAGILGA (86 aa)) form a required for JAK2 binding region. The Box 1 motif signature appears at 298–306 (ILPPVPVPK). Positions 341 to 350 (DSWVEFIELD) match the UbE motif motif. Residue Ser342 is modified to Phosphoserine. The interval 357-389 (KTEESDTDRLLSDDQEKSAGILGAKDDDSGRTS) is disordered. The span at 363-373 (TDRLLSDDQEK) shows a compositional bias: basic and acidic residues. Phosphotyrosine is present on residues Tyr487 and Tyr594.

The protein belongs to the type I cytokine receptor family. Type 1 subfamily. In terms of assembly, on growth hormone (GH) binding, forms homodimers and binds JAK2 via a box 1-containing domain. Post-translationally, the soluble form (GHBP) is produced by phorbol ester-promoted proteolytic cleavage at the cell surface (shedding) by ADAM17/TACE. Shedding is inhibited by growth hormone (GH) binding to the receptor probably due to a conformational change in GHR rendering the receptor inaccessible to ADAM17. On GH binding, phosphorylated on tyrosine residues in the cytoplasmic domain by JAK2. Phosphorylation on either (or all of) Tyr-534, Tyr-566 and/or Tyr-627 is required for STAT5 activation. Phosphorylation on Tyr-333 would seem necessary for JAK2 activation. In terms of processing, ubiquitinated by the ECS(SOCS2) complex following ligand-binding and phosphorylation by JAK2, leading to its degradation by the proteasome. Regulation by the ECS(SOCS2) complex acts as a negative feedback loop of growth hormone receptor signaling. Ubiquitination is not sufficient for GHR internalization. In terms of tissue distribution, highest expression in liver. Also expressed in heart, kidney and muscle.

It localises to the cell membrane. The protein localises to the secreted. Functionally, receptor for pituitary gland growth hormone involved in regulating postnatal body growth. On ligand binding, couples to, and activates the JAK2/STAT5 pathway. In terms of biological role, receptor for pituitary gland growth hormone (GH1) involved in regulating postnatal body growth. On ligand binding, couples to the JAK2/STAT5 pathway. The soluble form (GHBP) acts as a reservoir of growth hormone in plasma and may be a modulator/inhibitor of GH signaling. This is Growth hormone receptor (Ghr) from Rattus norvegicus (Rat).